Here is a 116-residue protein sequence, read N- to C-terminus: HVA22-like protein e (116 aa).

3 consecutive transmembrane segments (helical) span residues 12–32 (HSLAGPVVMLLYPLYASVIAI), 42–62 (QWLAYWILYSFLTLSELILQS), and 63–83 (LLEWIPIWYTAKLVFVAWLVL).

The protein belongs to the DP1 family. In terms of tissue distribution, predominantly expressed in stem.

It localises to the membrane. The polypeptide is HVA22-like protein e (HVA22E) (Arabidopsis thaliana (Mouse-ear cress)).